A 170-amino-acid polypeptide reads, in one-letter code: ATP synthase subunit b (170 aa).

The chain crosses the membrane as a helical span at residues 11–31 (AFTFGDAFFTLFAFAILLVLI).

The protein belongs to the ATPase B chain family. F-type ATPases have 2 components, F(1) - the catalytic core - and F(0) - the membrane proton channel. F(1) has five subunits: alpha(3), beta(3), gamma(1), delta(1), epsilon(1). F(0) has three main subunits: a(1), b(2) and c(10-14). The alpha and beta chains form an alternating ring which encloses part of the gamma chain. F(1) is attached to F(0) by a central stalk formed by the gamma and epsilon chains, while a peripheral stalk is formed by the delta and b chains.

It localises to the cell membrane. Its function is as follows. F(1)F(0) ATP synthase produces ATP from ADP in the presence of a proton or sodium gradient. F-type ATPases consist of two structural domains, F(1) containing the extramembraneous catalytic core and F(0) containing the membrane proton channel, linked together by a central stalk and a peripheral stalk. During catalysis, ATP synthesis in the catalytic domain of F(1) is coupled via a rotary mechanism of the central stalk subunits to proton translocation. Functionally, component of the F(0) channel, it forms part of the peripheral stalk, linking F(1) to F(0). The sequence is that of ATP synthase subunit b from Listeria innocua serovar 6a (strain ATCC BAA-680 / CLIP 11262).